An 835-amino-acid polypeptide reads, in one-letter code: Axin-1 (835 aa).

The disordered stretch occupies residues 16–60 (LGSSFTEDAPRPPVPGEEGDLVSSDGRQYNHSFYSSKSDSLKNEA). Positions 40–53 (DGRQYNHSFYSSKS) are enriched in polar residues. Positions 92–214 (SLHSLLDDQD…LKSDIYLEYT (123 aa)) constitute an RGS domain. The interval 318-349 (ATSANDSEQQSMSSDADTLSLTDSSVDGVPPY) is disordered. A compositionally biased stretch (low complexity) spans 328–344 (SMSSDADTLSLTDSSVD). Residues 351–436 (YRKPHRREIH…DADISTGPSL (86 aa)) form an interaction with GSK3B region. The interaction with beta-catenin stretch occupies residues 437–512 (ANHRVPPAVH…SPDGLPAGKI (76 aa)). Disordered stretches follow at residues 485 to 530 (KTPG…QARQ) and 602 to 627 (GYSS…FEMR). Over residues 616-627 (RKGEDGRNFEMR) the composition is skewed to basic and acidic residues. The 83-residue stretch at 753–835 (CENITVAYYF…KIIGKVEKVD (83 aa)) folds into the DIX domain.

Homodimer. Interacts with dixdc1. Interacts with hwa; leading to promote the tankyrase-mediated degradation of axin1. ADP-ribosylated by tankyrase tnks and tnks2. Poly-ADP-ribosylated protein is recognized by rnf146, followed by ubiquitination at 'Lys-48' and subsequent activation of the Wnt signaling pathway. Post-translationally, ubiquitinated by rnf146 when poly-ADP-ribosylated, leading to its degradation and subsequent activation of the Wnt signaling pathway.

The protein localises to the cytoplasm. It localises to the nucleus. The protein resides in the membrane. It is found in the cell membrane. Its function is as follows. Component of the beta-catenin destruction complex required for regulating ctnnb1 levels through phosphorylation and ubiquitination, and modulating Wnt-signaling. Controls dorsoventral patterning via two opposing effects: down-regulates ctnnb1 to inhibit the Wnt signaling pathway and ventralize embryos, but also dorsalizes embryos by activating a Wnt-independent JNK signaling pathway. In Danio rerio (Zebrafish), this protein is Axin-1 (axin1).